The sequence spans 40 residues: uncharacterized protein (40 aa).

Residues 1-14 (MNRMLSLSVQSQRA) show a composition bias toward polar residues. A disordered region spans residues 1–25 (MNRMLSLSVQSQRAPASPSPYGLKI).

This is an uncharacterized protein from Treponema pallidum (strain Nichols).